The primary structure comprises 253 residues: MRILVSNDDGVHAEGIRALSEALTACGEVIVVAPDRNRSGASHSLTLEVPLRVTRLGETGFNGSESYAVKGTPTDCVHLAVNELVRPEPDMVVAGINHGANLGDDVIYSGTVAAATEGRHLGFPSLAISLVGKTHFATAAHYAAQLVKGMMVHPLPADQILNVNVPDLPLDQIKGIRVTRLGNRHRAESVICSEDPRGQPIYWIGPPGSQQDAGEGTDFAAIEQGYVSITPLTIDMTAYSSLAGLGAWLDLQG.

Positions 8, 9, 39, and 97 each coordinate a divalent metal cation.

The protein belongs to the SurE nucleotidase family. The cofactor is a divalent metal cation.

It localises to the cytoplasm. The catalysed reaction is a ribonucleoside 5'-phosphate + H2O = a ribonucleoside + phosphate. Nucleotidase that shows phosphatase activity on nucleoside 5'-monophosphates. The sequence is that of 5'-nucleotidase SurE from Aeromonas hydrophila subsp. hydrophila (strain ATCC 7966 / DSM 30187 / BCRC 13018 / CCUG 14551 / JCM 1027 / KCTC 2358 / NCIMB 9240 / NCTC 8049).